Reading from the N-terminus, the 343-residue chain is MYNLARQLLFKLSPETSHELSLELIGAGGRLGLNAMLSKPPASLPVRVMGLDFPNPVGLAAGLDKNGEAIRGLSQLGFGFIEVGTVTPRPQPGNPKPRIFRLPEAEAIINRMGFNNHGVDALLARVEAARFKGVLGINIGKNFDTPVERADEDYLLCLDKVYHHASYVTVNVSSPNTPGLRSLQFGDSLKQLLDALRLRREDLEIMHGKRVPLAIKIAPDMTDEETALVGEAVFQAGMDAIIATNTTLGREGVAGLAHADEAGGLSGAPVRDKSTHTVKVLAQTLGGRLPIIAVGGITEGRHAAEKIEAGASLVQLYSGFIYKGPALIREAVDAIAALRSQAK.

FMN-binding positions include 61 to 65 and T85; that span reads AGLDK. K65 is a substrate binding site. 110–114 is a binding site for substrate; it reads NRMGF. Residues N138 and N171 each contribute to the FMN site. N171 lines the substrate pocket. The active-site Nucleophile is the S174. N176 contributes to the substrate binding site. K216 and T244 together coordinate FMN. 245 to 246 provides a ligand contact to substrate; that stretch reads NT. Residues G267, G296, and 317-318 each bind FMN; that span reads YS.

The protein belongs to the dihydroorotate dehydrogenase family. Type 2 subfamily. In terms of assembly, monomer. It depends on FMN as a cofactor.

The protein localises to the cell membrane. It carries out the reaction (S)-dihydroorotate + a quinone = orotate + a quinol. Its pathway is pyrimidine metabolism; UMP biosynthesis via de novo pathway; orotate from (S)-dihydroorotate (quinone route): step 1/1. Catalyzes the conversion of dihydroorotate to orotate with quinone as electron acceptor. The protein is Dihydroorotate dehydrogenase (quinone) of Stutzerimonas stutzeri (strain A1501) (Pseudomonas stutzeri).